We begin with the raw amino-acid sequence, 564 residues long: Arginine--tRNA ligase (564 aa).

The short motif at 122-132 (PNIAKPFSIGH) is the 'HIGH' region element.

Belongs to the class-I aminoacyl-tRNA synthetase family. Monomer.

Its subcellular location is the cytoplasm. The catalysed reaction is tRNA(Arg) + L-arginine + ATP = L-arginyl-tRNA(Arg) + AMP + diphosphate. This is Arginine--tRNA ligase from Lactococcus lactis subsp. lactis (strain IL1403) (Streptococcus lactis).